The sequence spans 317 residues: Transaldolase (317 aa).

Lys132 (schiff-base intermediate with substrate) is an active-site residue.

This sequence belongs to the transaldolase family. Type 1 subfamily. As to quaternary structure, homodimer.

The protein resides in the cytoplasm. It carries out the reaction D-sedoheptulose 7-phosphate + D-glyceraldehyde 3-phosphate = D-erythrose 4-phosphate + beta-D-fructose 6-phosphate. Its pathway is carbohydrate degradation; pentose phosphate pathway; D-glyceraldehyde 3-phosphate and beta-D-fructose 6-phosphate from D-ribose 5-phosphate and D-xylulose 5-phosphate (non-oxidative stage): step 2/3. Functionally, transaldolase is important for the balance of metabolites in the pentose-phosphate pathway. The chain is Transaldolase from Haemophilus influenzae (strain PittEE).